The primary structure comprises 256 residues: Tryptophan synthase alpha chain (256 aa).

Active-site proton acceptor residues include Glu-45 and Asp-56.

Belongs to the TrpA family. As to quaternary structure, tetramer of two alpha and two beta chains.

It catalyses the reaction (1S,2R)-1-C-(indol-3-yl)glycerol 3-phosphate + L-serine = D-glyceraldehyde 3-phosphate + L-tryptophan + H2O. Its pathway is amino-acid biosynthesis; L-tryptophan biosynthesis; L-tryptophan from chorismate: step 5/5. In terms of biological role, the alpha subunit is responsible for the aldol cleavage of indoleglycerol phosphate to indole and glyceraldehyde 3-phosphate. The polypeptide is Tryptophan synthase alpha chain (Christiangramia forsetii (strain DSM 17595 / CGMCC 1.15422 / KT0803) (Gramella forsetii)).